Here is a 141-residue protein sequence, read N- to C-terminus: Large ribosomal subunit protein uL14 (141 aa).

This sequence belongs to the universal ribosomal protein uL14 family. Part of the 50S ribosomal subunit. Forms a cluster with proteins L3 and L24e, part of which may contact the 16S rRNA in 2 intersubunit bridges.

Its function is as follows. Binds to 23S rRNA. Forms part of two intersubunit bridges in the 70S ribosome. The sequence is that of Large ribosomal subunit protein uL14 from Pyrococcus abyssi (strain GE5 / Orsay).